The following is a 326-amino-acid chain: E3 ubiquitin-protein ligase SINAT3 (326 aa).

Residues 1–44 are disordered; sequence MDLDSMDCTSTMDVTDDEEIHQDRHSYASVSKHHHTNNNTTNVN. The segment at 63–99 adopts an RING-type zinc-finger fold; the sequence is CPVCTNSMYPPIHQCHNGHTLCSTCKARVHNRCPTCR. Residues 113 to 306 form an SBD region; the sequence is VAESLELPCK…KELKLRVTGR (194 aa). The segment at 116–176 adopts an SIAH-type zinc-finger fold; the sequence is SLELPCKHMS…LVAHLRDDHK (61 aa). Positions 121, 128, 140, 144, 151, 158, 170, and 175 each coordinate Zn(2+).

This sequence belongs to the SINA (Seven in absentia) family. As to quaternary structure, interacts with SINAT6. Interacts with WAV3. Interacts with FREE1. Interacts with ELC/VPS23A.

The protein resides in the endosome. The protein localises to the multivesicular body. Its subcellular location is the cytoplasmic vesicle. It localises to the autophagosome. The catalysed reaction is S-ubiquitinyl-[E2 ubiquitin-conjugating enzyme]-L-cysteine + [acceptor protein]-L-lysine = [E2 ubiquitin-conjugating enzyme]-L-cysteine + N(6)-ubiquitinyl-[acceptor protein]-L-lysine.. Its pathway is protein modification; protein ubiquitination. In terms of biological role, E3 ubiquitin-protein ligase that mediates ubiquitination and subsequent proteasomal degradation of target proteins. E3 ubiquitin ligases accept ubiquitin from an E2 ubiquitin-conjugating enzyme in the form of a thioester and then directly transfers the ubiquitin to targeted substrates. It probably triggers the ubiquitin-mediated degradation of different substrates. Modulates directly the ubiquitination and proteasomal-dependent degradation of FREE1, a component of the ESCRT-I complex. Modulates directly the ubiquitination and proteasomal-dependent degradation of ELC/VPS23A, a component of the ESCRT-I complex. This is E3 ubiquitin-protein ligase SINAT3 from Arabidopsis thaliana (Mouse-ear cress).